A 356-amino-acid polypeptide reads, in one-letter code: Homoserine O-acetyltransferase (356 aa).

The AB hydrolase-1 domain occupies 50-335 (NVILVCHALT…DEPYGHDAFL (286 aa)). Residue Ser146 is the Nucleophile of the active site. A substrate-binding site is contributed by Arg215. Catalysis depends on residues Asp302 and His331. Asp332 is a binding site for substrate.

The protein belongs to the AB hydrolase superfamily. MetX family. Homodimer.

It is found in the cytoplasm. It catalyses the reaction L-homoserine + acetyl-CoA = O-acetyl-L-homoserine + CoA. The protein operates within amino-acid biosynthesis; L-methionine biosynthesis via de novo pathway; O-acetyl-L-homoserine from L-homoserine: step 1/1. In terms of biological role, transfers an acetyl group from acetyl-CoA to L-homoserine, forming acetyl-L-homoserine. This is Homoserine O-acetyltransferase from Chlorobaculum parvum (strain DSM 263 / NCIMB 8327) (Chlorobium vibrioforme subsp. thiosulfatophilum).